A 118-amino-acid polypeptide reads, in one-letter code: Large ribosomal subunit protein bL20 (118 aa).

The protein belongs to the bacterial ribosomal protein bL20 family.

Functionally, binds directly to 23S ribosomal RNA and is necessary for the in vitro assembly process of the 50S ribosomal subunit. It is not involved in the protein synthesizing functions of that subunit. The polypeptide is Large ribosomal subunit protein bL20 (Ralstonia nicotianae (strain ATCC BAA-1114 / GMI1000) (Ralstonia solanacearum)).